Reading from the N-terminus, the 264-residue chain is ATP synthase subunit a (264 aa).

6 helical membrane-spanning segments follow: residues 29–49 (TWHIDSLFFSVGLGVLFLWIF), 87–107 (NALIAPLALTIFVWVFMMNFM), 134–154 (DVNITFSLAIGVFVLIIYYSI), 177–197 (IPVNLLLETVTLVAKPISLAL), 208–228 (LIFILIALMYGTNLLLSSLGV), and 235–255 (LIFHILVITLQAFIFMMLTIV).

It belongs to the ATPase A chain family. In terms of assembly, F-type ATPases have 2 components, CF(1) - the catalytic core - and CF(0) - the membrane proton channel. CF(1) has five subunits: alpha(3), beta(3), gamma(1), delta(1), epsilon(1). CF(0) has three main subunits: a(1), b(2) and c(9-12). The alpha and beta chains form an alternating ring which encloses part of the gamma chain. CF(1) is attached to CF(0) by a central stalk formed by the gamma and epsilon chains, while a peripheral stalk is formed by the delta and b chains.

The protein resides in the cell inner membrane. In terms of biological role, key component of the proton channel; it plays a direct role in the translocation of protons across the membrane. The protein is ATP synthase subunit a of Shewanella sp. (strain ANA-3).